A 426-amino-acid chain; its full sequence is D-tagatose-1,6-bisphosphate aldolase subunit KbaZ (426 aa).

Belongs to the GatZ/KbaZ family. KbaZ subfamily. In terms of assembly, forms a complex with KbaY.

Its pathway is carbohydrate metabolism; D-tagatose 6-phosphate degradation; D-glyceraldehyde 3-phosphate and glycerone phosphate from D-tagatose 6-phosphate: step 2/2. Component of the tagatose-1,6-bisphosphate aldolase KbaYZ that is required for full activity and stability of the Y subunit. Could have a chaperone-like function for the proper and stable folding of KbaY. When expressed alone, KbaZ does not show any aldolase activity. The sequence is that of D-tagatose-1,6-bisphosphate aldolase subunit KbaZ from Escherichia coli O6:K15:H31 (strain 536 / UPEC).